Here is a 720-residue protein sequence, read N- to C-terminus: Exocyst complex component 7 (720 aa).

2 coiled-coil regions span residues 5 to 34 (EDASARKREIEEKLKQEQETLSFIRESLEK) and 63 to 83 (VHKQTENLQRLQENVDKTLSN). Ser-133 is modified (phosphoserine). Positions 249–268 (SPAVQTKRKETPTKKAPKRP) are disordered.

This sequence belongs to the EXO70 family.

It is found in the cytoplasm. Its subcellular location is the cytosol. It localises to the cell membrane. The protein localises to the midbody. The protein resides in the midbody ring. In terms of biological role, component of the exocyst complex involved in the docking of exocytic vesicles with fusion sites on the plasma membrane. It is required for neuron survival and plays an essential role in telencephalon development. In Danio rerio (Zebrafish), this protein is Exocyst complex component 7 (exoc7).